The following is a 1244-amino-acid chain: Ras-specific guanine nucleotide-releasing factor 1 (1244 aa).

A PH 1 domain is found at 22–129; the sequence is DGTRKGYLSK…WVAAIARASY (108 aa). Position 71 is a phosphoserine; by PLK2 (Ser-71). In terms of domain architecture, IQ spans 204–229; that stretch reads KKIKKVQSFLRGWLCRRKWKNIIQDY. One can recognise a DH domain in the interval 240–426; that stretch reads KRNQVVFSML…EELSRVMHDE (187 aa). In terms of domain architecture, PH 2 spans 456–582; the sequence is TFVRQGSLIQ…WTSDIIQCVD (127 aa). A phosphoserine; by PLK2 mark is found at Ser-575 and Ser-611. The N-terminal Ras-GEF domain occupies 629–743; the sequence is KVLQIRYASV…RRRKLSLNIP (115 aa). The interval 707–730 is disordered; the sequence is GDAPKSPRASRKFSSPPPLAIGTS. Ser-739 bears the Phosphoserine mark. Ser-760 and Ser-781 each carry phosphoserine; by PLK2. Positions 800-840 are disordered; that stretch reads TLEESSGFRKPTSDILKEESDDDQSDVDDTEVSPPTPKSFR. Residues 818-830 show a composition bias toward acidic residues; it reads ESDDDQSDVDDTE. Ser-854 is modified (phosphoserine; by PLK2). The 233-residue stretch at 1009-1241 folds into the Ras-GEF domain; it reads SAMEIAEQLT…YEASLRIEPK (233 aa).

Homooligomer and heterooligomer with RASGRF2. Interacts with USP8, thereby regulating its stability. Post-translationally, phosphorylated by PLK2, leading to ubiquitination and degradation by the proteasome. Ubiquitinated and degraded following phosphorylation by PLK2. In terms of processing, phosphorylated by SRC and LCK. Phosphorylation by LCK increases its capacity to stimulate the GDP/GTP exchange on Ras, whereas its phosphorylation by SRC seems not to have an effect on stimulation activity.

Promotes the exchange of Ras-bound GDP by GTP. The polypeptide is Ras-specific guanine nucleotide-releasing factor 1 (Rasgrf1) (Rattus norvegicus (Rat)).